A 476-amino-acid chain; its full sequence is Lactate utilization protein B 1 (476 aa).

4Fe-4S ferredoxin-type domains follow at residues 301–331 (GTEF…GHAY) and 350–379 (YDEY…LHDL). The [4Fe-4S] cluster site is built by Cys310, Cys313, Cys316, Cys320, Cys363, Cys366, and Cys370.

Belongs to the LutB/YkgF family.

Is involved in L-lactate degradation and allows cells to grow with lactate as the sole carbon source. Has probably a role as an electron transporter during oxidation of L-lactate. In Bacillus mycoides (strain KBAB4) (Bacillus weihenstephanensis), this protein is Lactate utilization protein B 1.